Reading from the N-terminus, the 511-residue chain is AMP phosphorylase (511 aa).

AMP-binding positions include Gly-168, 194 to 199 (SRAITS), and Thr-203. The active-site Proton donor is the Asp-256. AMP is bound by residues Ser-262 and Lys-286.

The protein belongs to the thymidine/pyrimidine-nucleoside phosphorylase family. Type 2 subfamily.

It carries out the reaction AMP + phosphate = alpha-D-ribose 1,5-bisphosphate + adenine. The enzyme catalyses CMP + phosphate = cytosine + alpha-D-ribose 1,5-bisphosphate. The catalysed reaction is UMP + phosphate = alpha-D-ribose 1,5-bisphosphate + uracil. In terms of biological role, catalyzes the conversion of AMP and phosphate to adenine and ribose 1,5-bisphosphate (R15P). Exhibits phosphorylase activity toward CMP and UMP in addition to AMP. Functions in an archaeal AMP degradation pathway, together with R15P isomerase and RubisCO. This is AMP phosphorylase from Thermofilum pendens (strain DSM 2475 / Hrk 5).